Here is a 194-residue protein sequence, read N- to C-terminus: Molybdenum cofactor guanylyltransferase (194 aa).

Residues leucine 12–glycine 14, lysine 25, asparagine 53, aspartate 71, and aspartate 101 each bind GTP. Residue aspartate 101 participates in Mg(2+) binding.

This sequence belongs to the MobA family. As to quaternary structure, monomer. Mg(2+) is required as a cofactor.

It is found in the cytoplasm. It carries out the reaction Mo-molybdopterin + GTP + H(+) = Mo-molybdopterin guanine dinucleotide + diphosphate. In terms of biological role, transfers a GMP moiety from GTP to Mo-molybdopterin (Mo-MPT) cofactor (Moco or molybdenum cofactor) to form Mo-molybdopterin guanine dinucleotide (Mo-MGD) cofactor. The protein is Molybdenum cofactor guanylyltransferase of Escherichia coli O6:H1 (strain CFT073 / ATCC 700928 / UPEC).